The following is a 161-amino-acid chain: Phosphopantetheine adenylyltransferase (161 aa).

Ser9 is a substrate binding site. ATP contacts are provided by residues Ser9 to Phe10 and His17. Substrate-binding residues include Lys41, Thr74, and Arg88. ATP contacts are provided by residues Gly89 to Arg91, Glu99, and Asn124 to Ser130.

Belongs to the bacterial CoaD family. Homohexamer. The cofactor is Mg(2+).

The protein localises to the cytoplasm. The enzyme catalyses (R)-4'-phosphopantetheine + ATP + H(+) = 3'-dephospho-CoA + diphosphate. The protein operates within cofactor biosynthesis; coenzyme A biosynthesis; CoA from (R)-pantothenate: step 4/5. Its function is as follows. Reversibly transfers an adenylyl group from ATP to 4'-phosphopantetheine, yielding dephospho-CoA (dPCoA) and pyrophosphate. The sequence is that of Phosphopantetheine adenylyltransferase from Lactobacillus acidophilus (strain ATCC 700396 / NCK56 / N2 / NCFM).